The primary structure comprises 588 residues: Sulfite reductase [NADPH] hemoprotein beta-component (588 aa).

[4Fe-4S] cluster-binding residues include Cys-442, Cys-448, Cys-487, and Cys-491. Cys-491 contributes to the siroheme binding site.

The protein belongs to the nitrite and sulfite reductase 4Fe-4S domain family. As to quaternary structure, alpha(8)-beta(8). The alpha component is a flavoprotein, the beta component is a hemoprotein. Requires siroheme as cofactor. [4Fe-4S] cluster serves as cofactor.

It catalyses the reaction hydrogen sulfide + 3 NADP(+) + 3 H2O = sulfite + 3 NADPH + 4 H(+). It participates in sulfur metabolism; hydrogen sulfide biosynthesis; hydrogen sulfide from sulfite (NADPH route): step 1/1. Component of the sulfite reductase complex that catalyzes the 6-electron reduction of sulfite to sulfide. This is one of several activities required for the biosynthesis of L-cysteine from sulfate. In Actinobacillus pleuropneumoniae serotype 5b (strain L20), this protein is Sulfite reductase [NADPH] hemoprotein beta-component.